A 281-amino-acid chain; its full sequence is Insulin-like growth factor-binding protein 7 (281 aa).

The signal sequence occupies residues 1–25; that stretch reads MERPPRALLLGAAGLLLLLLPLSSS. Residues 27–113 form the IGFBP N-terminal domain; it reads SSDACGPCVP…PATLAVCVCK (87 aa). 8 cysteine pairs are disulfide-bonded: Cys31–Cys56, Cys34–Cys58, Cys39–Cys59, Cys47–Cys62, Cys70–Cys86, Cys80–Cys110, Cys112–Cys130, and Cys119–Cys155. The Kazal-like domain occupies 98 to 157; it reads GAAAGGPATLAVCVCKSRYPVCGSNGITYPSGCQLRAASLRAESRGEKAITQVSKGTCEQ. The region spanning 159 to 263 is the Ig-like C2-type domain; it reads PSIVTPPKDI…GQASAAAKIT (105 aa). N-linked (GlcNAc...) asparagine glycosylation occurs at Asn170. An intrachain disulfide couples Cys180 to Cys247. Ser238 bears the Phosphoserine mark.

In terms of assembly, may interact with VPS24/CHMP3; the relevance of such interaction however remains unclear. Interacts with CD93; this interaction plays a role in endothelial cells angiogenesis. N-glycosylated. In terms of tissue distribution, expressed at high levels in lung, kidney, small intestine, testis and uterus and at moderate levels in liver.

It localises to the secreted. Functionally, binds IGF1 and IGF2 with a relatively low affinity. Stimulates prostacyclin (PGI2) production. Stimulates cell adhesion. Acts as a ligand for CD93 to play a role in angiogenesis. This Mus musculus (Mouse) protein is Insulin-like growth factor-binding protein 7 (Igfbp7).